A 250-amino-acid polypeptide reads, in one-letter code: Testis-expressed protein 101 (250 aa).

The first 25 residues, 1–25 (MGACRIQYILLVFLLIASHWTLVQN), serve as a signal peptide directing secretion. N-linked (GlcNAc...) asparagine glycans are attached at residues asparagine 45, asparagine 110, asparagine 134, and asparagine 160. Residues 141–215 (CPTCLALEPC…VKETCSYQSF (75 aa)) form the UPAR/Ly6 domain. The GPI-anchor amidated glycine moiety is linked to residue glycine 224. Residues 225–250 (ASWMPTSLWVLELLLPALSLPLIYFP) constitute a propeptide, removed in mature form.

As to quaternary structure, interacts with VAMP3. Interacts with LY6K. Interacts with DPEP3; co-localized on the cell surface of spermatocytes, spermatids, and testicular spermatozoa, co-localized only in cytoplasmic droplets of caput and corpus epididymal sperm. Interacts with ADAM5. Post-translationally, N-glycosylated; by high mannose and/or biantennary complex and/or certain types of hybrid oligosaccharides; possesses different oligosaccharides chains according to its subcellular localization in the testis. Sheds from membrane raft by ACE and released from the cell surface of epididymal sperm while it passes through the caput epididymis leading to disappearance of TEX101 on spermatozoa; is essential to produce fertile spermatozoa. In terms of tissue distribution, detected in testis.

The protein localises to the cell membrane. Its subcellular location is the membrane raft. The protein resides in the cytoplasmic vesicle. It is found in the secretory vesicle. It localises to the acrosome. The protein localises to the secreted. Its function is as follows. Plays a role in fertilization by controlling binding of sperm to zona pellucida and migration of spermatozoa into the oviduct. May play a role in signal transduction and promote protein tyrosine phosphorylation. This is Testis-expressed protein 101 from Rattus norvegicus (Rat).